A 280-amino-acid chain; its full sequence is Acetyl-coenzyme A carboxylase carboxyl transferase subunit beta (280 aa).

Residues 24–280 (AWIKCDKCKN…IYTLIRHTHG (257 aa)) enclose the CoA carboxyltransferase N-terminal domain. Cys28, Cys31, Cys47, and Cys50 together coordinate Zn(2+). The segment at 28–50 (CDKCKNILYIEDLLKNLKICPHC) adopts a C4-type zinc-finger fold.

This sequence belongs to the AccD/PCCB family. Acetyl-CoA carboxylase is a heterohexamer composed of biotin carboxyl carrier protein (AccB), biotin carboxylase (AccC) and two subunits each of ACCase subunit alpha (AccA) and ACCase subunit beta (AccD). Zn(2+) is required as a cofactor.

It is found in the cytoplasm. It catalyses the reaction N(6)-carboxybiotinyl-L-lysyl-[protein] + acetyl-CoA = N(6)-biotinyl-L-lysyl-[protein] + malonyl-CoA. Its pathway is lipid metabolism; malonyl-CoA biosynthesis; malonyl-CoA from acetyl-CoA: step 1/1. Component of the acetyl coenzyme A carboxylase (ACC) complex. Biotin carboxylase (BC) catalyzes the carboxylation of biotin on its carrier protein (BCCP) and then the CO(2) group is transferred by the transcarboxylase to acetyl-CoA to form malonyl-CoA. This Sulfurihydrogenibium sp. (strain YO3AOP1) protein is Acetyl-coenzyme A carboxylase carboxyl transferase subunit beta.